The primary structure comprises 514 residues: Glutathione-binding protein GsiB (514 aa).

A signal peptide spans 1–27 (MSVMTIQRRWLVAAGVTAAMVASPVWA).

Belongs to the bacterial solute-binding protein 5 family. In terms of assembly, the complex is composed of two ATP-binding proteins (GsiA), two transmembrane proteins (GsiC and GsiD) and a solute-binding protein (GsiB).

It localises to the periplasm. Functionally, part of the ABC transporter complex GsiABCD involved in glutathione import. Binds glutathione. In Pectobacterium atrosepticum (strain SCRI 1043 / ATCC BAA-672) (Erwinia carotovora subsp. atroseptica), this protein is Glutathione-binding protein GsiB.